The primary structure comprises 399 residues: Acetate kinase (399 aa).

Asn-10 is a binding site for Mg(2+). Residue Lys-17 coordinates ATP. Arg-91 is a substrate binding site. Asp-148 (proton donor/acceptor) is an active-site residue. Residues 208 to 212 (HLGNG), 283 to 285 (DCR), and 331 to 335 (GIGEN) each bind ATP. Position 385 (Glu-385) interacts with Mg(2+).

This sequence belongs to the acetokinase family. Homodimer. The cofactor is Mg(2+). Requires Mn(2+) as cofactor.

The protein resides in the cytoplasm. The enzyme catalyses acetate + ATP = acetyl phosphate + ADP. It functions in the pathway metabolic intermediate biosynthesis; acetyl-CoA biosynthesis; acetyl-CoA from acetate: step 1/2. In terms of biological role, catalyzes the formation of acetyl phosphate from acetate and ATP. Can also catalyze the reverse reaction. In Shewanella baltica (strain OS223), this protein is Acetate kinase.